We begin with the raw amino-acid sequence, 286 residues long: Protein WVD2-like 1 (286 aa).

Residues Glu31–Asp101 are disordered. Position 32 is a phosphothreonine (Thr32). The span at Val38–Leu47 shows a compositional bias: basic and acidic residues. Positions Ala131–Lys182 form a coiled coil. Residues Asn186–Ala286 are disordered. The span at Thr234 to Gln247 shows a compositional bias: polar residues.

This sequence belongs to the TPX2 family.

The protein localises to the cytoplasm. It localises to the cytoskeleton. Microtubule-associated protein (MAP) that regulates the orientation of interphase cortical microtubules. Modulates both rotational polarity and anisotropic cell expansion during organ growth. Promotes clockwise root and etiolated hypocotyls coiling, clockwise leaf curling, but left-handed petiole twisting. The chain is Protein WVD2-like 1 (WDL1) from Arabidopsis thaliana (Mouse-ear cress).